The following is a 478-amino-acid chain: Proline--tRNA ligase (478 aa).

This sequence belongs to the class-II aminoacyl-tRNA synthetase family. ProS type 3 subfamily. In terms of assembly, homodimer.

The protein resides in the cytoplasm. The catalysed reaction is tRNA(Pro) + L-proline + ATP = L-prolyl-tRNA(Pro) + AMP + diphosphate. In terms of biological role, catalyzes the attachment of proline to tRNA(Pro) in a two-step reaction: proline is first activated by ATP to form Pro-AMP and then transferred to the acceptor end of tRNA(Pro). In Methanothrix thermoacetophila (strain DSM 6194 / JCM 14653 / NBRC 101360 / PT) (Methanosaeta thermophila), this protein is Proline--tRNA ligase.